The following is a 126-amino-acid chain: Lymphocyte antigen 6 complex locus protein G6c (126 aa).

An N-terminal signal peptide occupies residues 1–19 (MKHLLLLTLSALLYCWVSA). The 92-residue stretch at 21-112 (TRCHSCYKVP…PRPTPALALI (92 aa)) folds into the UPAR/Ly6 domain. 3 disulfide bridges follow: cysteine 23–cysteine 48, cysteine 26–cysteine 34, and cysteine 40–cysteine 66. The N-linked (GlcNAc...) (high mannose) asparagine glycan is linked to asparagine 89. Cysteine 93 and cysteine 98 are oxidised to a cystine. Serine 100 is lipidated: GPI-anchor amidated serine. Positions 101–126 (PAPRPTPALALISLTSLAGLGLWLLH) are cleaved as a propeptide — removed in mature form.

Monomer. Post-translationally, N-glycosylated. In terms of tissue distribution, highly expressed at the leading edges of cells, on filopodia.

Its subcellular location is the cell membrane. The sequence is that of Lymphocyte antigen 6 complex locus protein G6c (Ly6g6c) from Mus musculus (Mouse).